The following is a 464-amino-acid chain: Argininosuccinate lyase (464 aa).

It belongs to the lyase 1 family. Argininosuccinate lyase subfamily.

The protein resides in the cytoplasm. The enzyme catalyses 2-(N(omega)-L-arginino)succinate = fumarate + L-arginine. Its pathway is amino-acid biosynthesis; L-arginine biosynthesis; L-arginine from L-ornithine and carbamoyl phosphate: step 3/3. With respect to regulation, strongly inhibited by L-arginine. Inhibitory effects are lowered at pH 7.0 compared to those at pH 8.0. At 37 degrees Celsius and pH 7.5, activity decreases to 73% and 31% in the presence of 1 mM and 10 mM arginine, respectively. Activity also decreases to 84%, 93%, 82% and 85% in the presence of 10 mM sodium citrate, citrulline, asparatate and glutamate, respectively. Activity decreases to 96% in presence of 1 mM L-lysine. Functionally, catalyzes the last step of arginine biosynthesis, the conversion of argininosuccinate into L-arginine and fumarate. The chain is Argininosuccinate lyase from Arthrospira platensis (strain NIES-39 / UTEX 3086 / IAM M-135) (Spirulina platensis).